Here is a 493-residue protein sequence, read N- to C-terminus: Probable cytosol aminopeptidase (493 aa).

Positions 257 and 262 each coordinate Mn(2+). K269 is an active-site residue. The Mn(2+) site is built by D281, D341, and E343. The active site involves R345.

Belongs to the peptidase M17 family. It depends on Mn(2+) as a cofactor.

The protein resides in the cytoplasm. The enzyme catalyses Release of an N-terminal amino acid, Xaa-|-Yaa-, in which Xaa is preferably Leu, but may be other amino acids including Pro although not Arg or Lys, and Yaa may be Pro. Amino acid amides and methyl esters are also readily hydrolyzed, but rates on arylamides are exceedingly low.. It catalyses the reaction Release of an N-terminal amino acid, preferentially leucine, but not glutamic or aspartic acids.. In terms of biological role, presumably involved in the processing and regular turnover of intracellular proteins. Catalyzes the removal of unsubstituted N-terminal amino acids from various peptides. The polypeptide is Probable cytosol aminopeptidase (Prochlorococcus marinus (strain MIT 9211)).